A 354-amino-acid polypeptide reads, in one-letter code: Uroporphyrinogen decarboxylase (354 aa).

Residues 27-31 (RQAGR), aspartate 77, tyrosine 154, serine 209, and histidine 327 each bind substrate.

The protein belongs to the uroporphyrinogen decarboxylase family. As to quaternary structure, homodimer.

The protein resides in the cytoplasm. The catalysed reaction is uroporphyrinogen III + 4 H(+) = coproporphyrinogen III + 4 CO2. It participates in porphyrin-containing compound metabolism; protoporphyrin-IX biosynthesis; coproporphyrinogen-III from 5-aminolevulinate: step 4/4. Catalyzes the decarboxylation of four acetate groups of uroporphyrinogen-III to yield coproporphyrinogen-III. The polypeptide is Uroporphyrinogen decarboxylase (Shewanella sp. (strain ANA-3)).